We begin with the raw amino-acid sequence, 349 residues long: Phenylalanine--tRNA ligase alpha subunit (349 aa).

Glu259 is a Mg(2+) binding site.

It belongs to the class-II aminoacyl-tRNA synthetase family. Phe-tRNA synthetase alpha subunit type 1 subfamily. Tetramer of two alpha and two beta subunits. It depends on Mg(2+) as a cofactor.

It is found in the cytoplasm. The catalysed reaction is tRNA(Phe) + L-phenylalanine + ATP = L-phenylalanyl-tRNA(Phe) + AMP + diphosphate + H(+). In Lactobacillus acidophilus (strain ATCC 700396 / NCK56 / N2 / NCFM), this protein is Phenylalanine--tRNA ligase alpha subunit.